A 335-amino-acid polypeptide reads, in one-letter code: Mesoderm-specific transcript protein (335 aa).

The next 2 membrane-spanning stretches (helical) occupy residues Trp-13–Pro-33 and Val-63–Tyr-83. The AB hydrolase-1 domain occupies Ile-71–Asp-310. An RVIALD motif is present at residues Arg-98–Asp-103. An N-linked (GlcNAc...) asparagine glycan is attached at Asn-163. The chain crosses the membrane as a helical span at residues Val-266–Ile-286.

This sequence belongs to the AB hydrolase superfamily. Expressed in mesodermal tissues. Isoform 1 is exclusively expressed from the paternal allele in all fetal tissues and cell lines examined, whereas isoform 2 is preferentially expressed from the paternal allele in a tissue-type-specific manner.

It localises to the endoplasmic reticulum membrane. In Mus musculus (Mouse), this protein is Mesoderm-specific transcript protein (Mest).